The chain runs to 334 residues: Ketol-acid reductoisomerase (NADP(+)) (334 aa).

The region spanning 1–181 (MNRYYDKNAD…GGGRTGILET (181 aa)) is the KARI N-terminal Rossmann domain. Residues 24–27 (YGSQ), R47, S50, S52, and 82–85 (DEFQ) contribute to the NADP(+) site. Residue H107 is part of the active site. An NADP(+)-binding site is contributed by G133. In terms of domain architecture, KARI C-terminal knotted spans 182 to 323 (SFKDETETDL…ESLRSMMPWI (142 aa)). Mg(2+) is bound by residues D190, E194, E226, and E230. S251 is a binding site for substrate.

Belongs to the ketol-acid reductoisomerase family. Requires Mg(2+) as cofactor.

The enzyme catalyses (2R)-2,3-dihydroxy-3-methylbutanoate + NADP(+) = (2S)-2-acetolactate + NADPH + H(+). It catalyses the reaction (2R,3R)-2,3-dihydroxy-3-methylpentanoate + NADP(+) = (S)-2-ethyl-2-hydroxy-3-oxobutanoate + NADPH + H(+). The protein operates within amino-acid biosynthesis; L-isoleucine biosynthesis; L-isoleucine from 2-oxobutanoate: step 2/4. It functions in the pathway amino-acid biosynthesis; L-valine biosynthesis; L-valine from pyruvate: step 2/4. Its function is as follows. Involved in the biosynthesis of branched-chain amino acids (BCAA). Catalyzes an alkyl-migration followed by a ketol-acid reduction of (S)-2-acetolactate (S2AL) to yield (R)-2,3-dihydroxy-isovalerate. In the isomerase reaction, S2AL is rearranged via a Mg-dependent methyl migration to produce 3-hydroxy-3-methyl-2-ketobutyrate (HMKB). In the reductase reaction, this 2-ketoacid undergoes a metal-dependent reduction by NADPH to yield (R)-2,3-dihydroxy-isovalerate. The polypeptide is Ketol-acid reductoisomerase (NADP(+)) (Ruthia magnifica subsp. Calyptogena magnifica).